Here is a 285-residue protein sequence, read N- to C-terminus: Polyamine aminopropyltransferase (285 aa).

In terms of domain architecture, PABS spans 2-237 (DLWFSESHTP…GYWCFGFASK (236 aa)). Q31 is an S-methyl-5'-thioadenosine binding site. D86 contributes to the spermidine binding site. S-methyl-5'-thioadenosine is bound by residues E106 and 137-138 (DG). The Proton acceptor role is filled by D155.

It belongs to the spermidine/spermine synthase family. In terms of assembly, homodimer or homotetramer.

The protein resides in the cytoplasm. It catalyses the reaction S-adenosyl 3-(methylsulfanyl)propylamine + putrescine = S-methyl-5'-thioadenosine + spermidine + H(+). It functions in the pathway amine and polyamine biosynthesis; spermidine biosynthesis; spermidine from putrescine: step 1/1. Functionally, catalyzes the irreversible transfer of a propylamine group from the amino donor S-adenosylmethioninamine (decarboxy-AdoMet) to putrescine (1,4-diaminobutane) to yield spermidine. The sequence is that of Polyamine aminopropyltransferase from Streptococcus uberis (strain ATCC BAA-854 / 0140J).